Consider the following 1090-residue polypeptide: MSSGLVLENTARRDALIAIEKKYQKIWAEEHQFEIDAPSIEDEPITMDSEELHRTYPKFMSSMAYPYMNGVMHAGHCFTLSKVEFSIGFERMNGKRALFPLGFHCTGMPILACADKLKREAELFGKNFDNVPAEEEEIKEETPAEKDHEDVTKFKAKKSKAAAKKGRGKYQFEIMLQLGIPREEIIKFADAKYWLTYFPPLCESDCTSLGARIDWRRSFVTTDANPYYDAFIRWQMNKLKAAGKIKFGERYTIYSEKDGQACMDHDRQSGEGVTPQEYIGVKIEALEFADDAAKIIDSSSDLDKSKKFYFVAATLRPETMYGQTCCFVSPTIEYGIFDAGDSYFITTERAFKNMSYQKLTPKRGFYKPIVTVPGKAFIGTKIHAPQSVYPELRILPMETVIATKGTGVVTCVPSNSPDDYITTKDLLHKPEYYGIKPEWIDHEIVPIMHTEKYGDLTAKAIVEEKKIQSPKDKNLLAEAKKIAYKEDYYTGTMIYGPYKGEKVEQAKNKVKADMIAAGEAFVYNEPESQVMSRSGDDCIVSLEDQWYVDYGEESWKKQAIECLEGMQLFAPEVKNAFEGVLDWLKNWAVCRTYGLGTRLPWDEKYLVESLSDSTIYQSFYTIAHLLFKDYYGNEIGPLGISADQMTDEVFDYIFQHQDDVKNTNIPLPALQKLRREFEYFYPLDVSISGKDLIPNHLTFFIYTHVALFPKKFWPKGIRANGHLMLNNSKMSKSTGNFMTLEQTVEKFGADAARIAFADAGDTVEDANFDESNANAAILRLFNLKEWAEEITKESNLRTGEITDFFDIAFEHEMNALIEKTYEQYALTNYKNALKYGLFDFQAARDYYREASGVMHKDLIARYIETQALLLAPIAPHFAEYIYREVLGNQTSVQNAKFPRASKPVDKGVLAALDYLRNLQRSIREGEGQALKKKKGKSAEIDASKPVKLTLLISESFPEWQSQCVEIVRKLFSEQTLDDNKKVREHIEPKEMKRAMPFISLLKQRLANEKPEDVFERELQFSEIDTVKAAARNVKKAAQALKIAEFSAISFPYGAKTGKDIFTGEEVEIPPVTKIVENAVPGNPGVVFQNI.

Serine 2 carries the N-acetylserine modification. A 'HIGH' region motif is present at residues 66 to 76; the sequence is PYMNGVMHAGH. Position 142 is a phosphothreonine (threonine 142). Residues 729-733 carry the 'KMSKS' region motif; the sequence is KMSKS. Position 732 (lysine 732) interacts with ATP.

It belongs to the class-I aminoacyl-tRNA synthetase family.

The protein resides in the cytoplasm. The enzyme catalyses tRNA(Leu) + L-leucine + ATP = L-leucyl-tRNA(Leu) + AMP + diphosphate. This Saccharomyces cerevisiae (strain ATCC 204508 / S288c) (Baker's yeast) protein is Leucine--tRNA ligase, cytoplasmic (CDC60).